Here is a 209-residue protein sequence, read N- to C-terminus: Uracil phosphoribosyltransferase (209 aa).

5-phospho-alpha-D-ribose 1-diphosphate contacts are provided by residues Arg-79, Arg-104, and 131 to 139 (DPMLATGGS). Uracil is bound by residues Ile-194 and 199–201 (GDA). Asp-200 lines the 5-phospho-alpha-D-ribose 1-diphosphate pocket.

Belongs to the UPRTase family. Mg(2+) serves as cofactor.

It catalyses the reaction UMP + diphosphate = 5-phospho-alpha-D-ribose 1-diphosphate + uracil. Its pathway is pyrimidine metabolism; UMP biosynthesis via salvage pathway; UMP from uracil: step 1/1. With respect to regulation, allosterically activated by GTP. Its function is as follows. Catalyzes the conversion of uracil and 5-phospho-alpha-D-ribose 1-diphosphate (PRPP) to UMP and diphosphate. The sequence is that of Uracil phosphoribosyltransferase from Natranaerobius thermophilus (strain ATCC BAA-1301 / DSM 18059 / JW/NM-WN-LF).